We begin with the raw amino-acid sequence, 3036 residues long: DmX-like protein 2 (3036 aa).

WD repeat units lie at residues 108 to 145 (FLSS…ILEE), 167 to 207 (KTSV…KSSI), and 230 to 278 (AHPR…EDCL). Ser-326 is modified (phosphoserine). Residues 417 to 480 (KQVDHENDDA…EGSPRTYSRL (64 aa)) are disordered. Residues 422-434 (ENDDADREDEEHS) show a composition bias toward acidic residues. The span at 435-473 (QEDRERGLHMKLDHDLSLDRESEAGTGSSEHEDGEREGS) shows a compositional bias: basic and acidic residues. Ser-473 carries the post-translational modification Phosphoserine. A WD 4 repeat occupies 492 to 532 (DRKIETLLTEWNKNPDMLFTIHPVDGTFLVWHVKYLDEYNP). At Ser-588 the chain carries Phosphoserine. WD repeat units lie at residues 595–634 (HSRS…KSAF), 751–803 (LHTS…RKLL), and 878–920 (QPSQ…VQAC). The interval 932 to 959 (SLLSVPGQKNVDSSPETSPSVSPMPHSS) is disordered. Residues Ser-944 and Ser-945 each carry the phosphoserine modification. Residues 949-959 (SPSVSPMPHSS) show a composition bias toward low complexity. One copy of the WD 8 repeat lies at 1000-1037 (LSSSSIYPVCLAPYLVVTTCSDNKVRFWKCCMEANPEC). Phosphoserine occurs at positions 1140, 1143, and 1151. WD repeat units follow at residues 1163–1204 (PNIK…VTEQ) and 1244–1281 (GTPS…VKFG). A phosphoserine mark is found at Ser-1287 and Ser-1400. Thr-1417 is modified (phosphothreonine). Ser-1857 carries the post-translational modification Phosphoserine. Over residues 1927-1936 (ISHRMDDVPS) the composition is skewed to basic and acidic residues. The interval 1927–1952 (ISHRMDDVPSHSKALSDGNGSSGIEW) is disordered. At Ser-1984 the chain carries Phosphoserine. A disordered region spans residues 1999–2033 (KSTDAREKDKQSDQKASDPNMLLTPQEEDDPEGDT). The span at 2001 to 2014 (TDAREKDKQSDQKA) shows a compositional bias: basic and acidic residues. The residue at position 2022 (Thr-2022) is a Phosphothreonine. Positions 2024–2033 (QEEDDPEGDT) are enriched in acidic residues. The stretch at 2122 to 2153 (GSYERHQIERRRLQAKREHAERRKSWLQKNQD) forms a coiled coil. Ser-2399 and Ser-2640 each carry phosphoserine. 6 WD repeats span residues 2761–2800 (RNLH…QLVC), 2804–2843 (AGNA…SNPK), 2850–2892 (CHSK…GNSL), 2898–2937 (CHDH…LIHT), 2940–2979 (AHDS…LIHS), and 2992–3030 (NIGA…NIPN).

As to quaternary structure, interacts with MADD and RAB3GAP.

The protein resides in the cytoplasmic vesicle. The protein localises to the secretory vesicle. It is found in the synaptic vesicle membrane. It localises to the neuronal dense core vesicle. Functionally, may serve as a scaffold protein for MADD and RAB3GA on synaptic vesicles. Plays a role in the brain as a key controller of neuronal and endocrine homeostatic processes. The chain is DmX-like protein 2 (DMXL2) from Homo sapiens (Human).